We begin with the raw amino-acid sequence, 420 residues long: UDP-N-acetyl-D-mannosamine dehydrogenase (420 aa).

The NAD(+) site is built by tyrosine 13, isoleucine 14, aspartate 33, threonine 85, and threonine 126. Positions 160, 161, 212, 216, 219, 250, 252, and 263 each coordinate UDP-N-acetyl-alpha-D-mannosaminouronate. Catalysis depends on lysine 212, which acts as the Proton donor/acceptor. The active-site Nucleophile is cysteine 266. Residues phenylalanine 330 and lysine 331 each contribute to the UDP-N-acetyl-alpha-D-mannosaminouronate site. Position 338 (arginine 338) interacts with NAD(+). Lysine 416 contributes to the UDP-N-acetyl-alpha-D-mannosaminouronate binding site.

The protein belongs to the UDP-glucose/GDP-mannose dehydrogenase family. WecC subfamily. As to quaternary structure, homodimer.

The enzyme catalyses UDP-N-acetyl-alpha-D-mannosamine + 2 NAD(+) + H2O = UDP-N-acetyl-alpha-D-mannosaminouronate + 2 NADH + 3 H(+). Its pathway is bacterial outer membrane biogenesis; enterobacterial common antigen biosynthesis. In terms of biological role, catalyzes the four-electron oxidation of UDP-N-acetyl-D-mannosamine (UDP-ManNAc), reducing NAD(+) and releasing UDP-N-acetylmannosaminuronic acid (UDP-ManNAcA). The chain is UDP-N-acetyl-D-mannosamine dehydrogenase from Salmonella typhimurium (strain LT2 / SGSC1412 / ATCC 700720).